The chain runs to 122 residues: UPF0102 protein CPE1705 (122 aa).

It belongs to the UPF0102 family.

This chain is UPF0102 protein CPE1705, found in Clostridium perfringens (strain 13 / Type A).